The primary structure comprises 629 residues: DNA mismatch repair protein MutL (629 aa).

It belongs to the DNA mismatch repair MutL/HexB family.

Functionally, this protein is involved in the repair of mismatches in DNA. It is required for dam-dependent methyl-directed DNA mismatch repair. May act as a 'molecular matchmaker', a protein that promotes the formation of a stable complex between two or more DNA-binding proteins in an ATP-dependent manner without itself being part of a final effector complex. This Haemophilus influenzae (strain 86-028NP) protein is DNA mismatch repair protein MutL.